A 236-amino-acid polypeptide reads, in one-letter code: Small ribosomal subunit protein uS2c (236 aa).

Belongs to the universal ribosomal protein uS2 family.

The protein resides in the plastid. Its subcellular location is the chloroplast. The chain is Small ribosomal subunit protein uS2c (rps2) from Guizotia abyssinica (Niger).